The chain runs to 213 residues: Putative manganese efflux pump MntP (213 aa).

Helical transmembrane passes span 6 to 26 (LGVL…GIGM), 34 to 54 (AFML…FGIL), 58 to 78 (ALGL…LFFL), 107 to 127 (GSGG…LFAP), 132 to 152 (LVVI…SLGT), 153 to 173 (VGAQ…IMTV), and 192 to 212 (LAGG…SASP).

The protein belongs to the MntP (TC 9.B.29) family.

Its subcellular location is the cell membrane. Probably functions as a manganese efflux pump. This Heliobacterium modesticaldum (strain ATCC 51547 / Ice1) protein is Putative manganese efflux pump MntP.